A 935-amino-acid chain; its full sequence is Pre-mRNA-splicing factor CWC22 homolog (935 aa).

The disordered stretch occupies residues 1–179; it reads MSRSPSPDSP…PKDLLRTRTG (179 aa). Basic and acidic residues-rich tracts occupy residues 13 to 25 and 49 to 70; these read VRDD…REQS and ESSR…DEKM. The span at 84-148 shows a compositional bias: basic residues; sequence QHRRHRESRS…RSPARRRSPV (65 aa). Basic and acidic residues predominate over residues 159 to 175; it reads PTEEPEKKKNDPKDLLR. The 189-residue stretch at 212-400 folds into the MIF4G domain; it reads KKKIHGLVNR…ETAMQIRKDK (189 aa). A disordered region spans residues 463–489; that stretch reads ADISSDEEEEVEDDDEESEAEEAPRKT. The span at 465–483 shows a compositional bias: acidic residues; sequence ISSDEEEEVEDDDEESEAE. One can recognise an MI domain in the interval 502–633; sequence AFRREVYLTL…EWKILADVKM (132 aa). Residues 725 to 935 form a disordered region; sequence KAAQSSSDSS…VGSDDRRRRH (211 aa). Positions 729–763 are enriched in low complexity; sequence SSSDSSSDSSDSSDSSDSSGSSDSSDDSSSSSSSD. 2 stretches are compositionally biased toward basic and acidic residues: residues 780–891 and 897–935; these read KKKE…DRKE and DRRD…RRRH.

This sequence belongs to the CWC22 family.

The protein resides in the nucleus. The protein localises to the nucleus speckle. Its function is as follows. Required for early embryogenesis and tissue differentiation. Required for pre-mRNA splicing and for exon-junction complex (EJC) assembly. Hinders EIF4A3 from non-specifically binding RNA and escorts it to the splicing machinery to promote EJC assembly on mature mRNAs. Through its role in EJC assembly, required for nonsense-mediated mRNA decay. This Caenorhabditis briggsae protein is Pre-mRNA-splicing factor CWC22 homolog.